Reading from the N-terminus, the 835-residue chain is Protein translocase subunit SecA 1 (835 aa).

ATP-binding positions include glutamine 85, 103–107, and aspartate 492; that span reads GEGKT. A disordered region spans residues 788–807; it reads VQGEAVHPSSDGEEAKKKPV. Zn(2+)-binding residues include cysteine 819, cysteine 821, cysteine 830, and cysteine 831.

It belongs to the SecA family. In terms of assembly, monomer and homodimer. Part of the essential Sec protein translocation apparatus which comprises SecA, SecYEG and auxiliary proteins SecDF. Other proteins may also be involved. Zn(2+) is required as a cofactor.

Its subcellular location is the cell membrane. It localises to the cytoplasm. It carries out the reaction ATP + H2O + cellular proteinSide 1 = ADP + phosphate + cellular proteinSide 2.. Its function is as follows. Part of the Sec protein translocase complex. Interacts with the SecYEG preprotein conducting channel. Has a central role in coupling the hydrolysis of ATP to the transfer of proteins into and across the cell membrane, serving as an ATP-driven molecular motor driving the stepwise translocation of polypeptide chains across the membrane. The sequence is that of Protein translocase subunit SecA 1 from Bacillus thuringiensis (strain Al Hakam).